The primary structure comprises 200 residues: Rho-related protein racH (200 aa).

11–18 (GDMSVGKT) serves as a coordination point for GTP. Residues 33 to 41 (YVPTVFDNY) carry the Effector region motif. GTP is bound by residues 58 to 62 (DTAGS) and 117 to 120 (TKLD). Residues 178-200 (EELAKSKKDSKKGDKDSKDCIIQ) are disordered. C197 bears the Cysteine methyl ester mark. C197 is lipidated: S-geranylgeranyl cysteine. Residues 198–200 (IIQ) constitute a propeptide, removed in mature form.

Belongs to the small GTPase superfamily. Rho family.

The protein resides in the cell membrane. This is Rho-related protein racH (racH) from Dictyostelium discoideum (Social amoeba).